We begin with the raw amino-acid sequence, 605 residues long: MKRKLDANDVPSPEAADKKEKKEEDDADFESLNLDPRLRQALIKEKFTKPTLVQAKAIPLALEGKDILARAKTGSGKTAAYVLPILQTILQKKATDPSFKATTGLILVPTRELAEQVQNVVTTFAAFCGKDVRSVNLTQKVSDAVQRTMLADYPDLVVSTPARVVTNLGSSALSLENLTHLVIDEADLVLSYGYEEDINALAKAIPRGVQTFLMSATLTDEVDTLKGLFCRSPVTLKLEDKDDQGAGVSQFVVRCAEDEKFLLTYVIFKLQLIKGKVIIFVDDVDRCYRVKLFLEQFGIKSCVLNSELPINSRIHVVQEFNKGVYDILIAADEQEVIGARKSKKSKETEEAGSSDEDEGEPEDKSKRRKVSGKEKDYGISRGIDFQNVACVLNFDLPSTSKSYTHRIGRTGRAGKTGMALSFVIPKDQHGKHRPTSTATSKHDESVLAKIVKRQGKLGHEVKPYHFEMKQVEAFRYRMTDALRAVTRLAVQEARAREIRQELIKSEKLKRHFEENPEELRQLRHDDELRSARVQPHLKHIPEYLMPAKGKKGLSSGDVGFVSFRKQNENRIRKAREKNRGKGNGRKFAGVKKKVDPLKTFNRGRK.

The interval 1–30 (MKRKLDANDVPSPEAADKKEKKEEDDADFE) is disordered. Over residues 15–24 (AADKKEKKEE) the composition is skewed to basic and acidic residues. The short motif at 27–55 (ADFESLNLDPRLRQALIKEKFTKPTLVQA) is the Q motif element. A Helicase ATP-binding domain is found at 58–236 (IPLALEGKDI…GLFCRSPVTL (179 aa)). Position 71–78 (71–78 (AKTGSGKT)) interacts with ATP. The short motif at 184-187 (DEAD) is the DEAD box element. The 223-residue stretch at 247–469 (GVSQFVVRCA…EVKPYHFEMK (223 aa)) folds into the Helicase C-terminal domain. Disordered stretches follow at residues 339–373 (ARKS…VSGK) and 564–605 (RKQN…RGRK). Residues 350-361 (EAGSSDEDEGEP) show a composition bias toward acidic residues. A compositionally biased stretch (basic residues) spans 572-591 (RKAREKNRGKGNGRKFAGVK).

The protein belongs to the DEAD box helicase family. DDX56/DBP9 subfamily.

The protein localises to the nucleus. Its subcellular location is the nucleolus. It carries out the reaction ATP + H2O = ADP + phosphate + H(+). Its function is as follows. ATP-binding RNA helicase involved in the biogenesis of 60S ribosomal subunits and is required for the normal formation of 25S and 5.8S rRNAs. In Aspergillus oryzae (strain ATCC 42149 / RIB 40) (Yellow koji mold), this protein is ATP-dependent RNA helicase dbp9 (dbp9).